The primary structure comprises 513 residues: Xylose import ATP-binding protein XylG (513 aa).

ABC transporter domains lie at 5–242 (LEMK…VGRE) and 259–505 (LRIE…LRSE). Residue 37 to 44 (GENGSGKS) coordinates ATP.

It belongs to the ABC transporter superfamily. Xylose importer (TC 3.A.1.2.4) family. In terms of assembly, the complex is composed of two ATP-binding proteins (XylG), two transmembrane proteins (XylH) and a solute-binding protein (XylF).

The protein localises to the cell inner membrane. The catalysed reaction is D-xylose(out) + ATP + H2O = D-xylose(in) + ADP + phosphate + H(+). Part of the ABC transporter complex XylFGH involved in xylose import. Responsible for energy coupling to the transport system. This is Xylose import ATP-binding protein XylG from Escherichia coli O6:K15:H31 (strain 536 / UPEC).